Consider the following 545-residue polypeptide: Hyaluronidase PH-20 (545 aa).

An N-terminal signal peptide occupies residues 1-35; sequence MGVLKFKHIFFGSAVELSGVFQIVFIFLLIPCCLT. 2 disulfides stabilise this stretch: Cys-60–Cys-355 and Cys-224–Cys-239. N-linked (GlcNAc...) asparagine glycosylation is present at Asn-82. Glu-148 acts as the Proton donor in catalysis. Asn-180 is a glycosylation site (N-linked (GlcNAc...) asparagine). Asn-372 is a glycosylation site (N-linked (GlcNAc...) asparagine). 3 disulfides stabilise this stretch: Cys-380-Cys-391, Cys-385-Cys-439, and Cys-441-Cys-468.

It belongs to the glycosyl hydrolase 56 family. In terms of tissue distribution, testis.

It localises to the cell membrane. The enzyme catalyses Random hydrolysis of (1-&gt;4)-linkages between N-acetyl-beta-D-glucosamine and D-glucuronate residues in hyaluronate.. Its function is as follows. Involved in sperm-egg adhesion. Upon fertilization sperm must first penetrate a layer of cumulus cells that surrounds the egg before reaching the zona pellucida. The cumulus cells are embedded in a matrix containing hyaluronic acid which is formed prior to ovulation. This protein aids in penetrating the layer of cumulus cells by digesting hyaluronic acid. The sequence is that of Hyaluronidase PH-20 (SPAM1) from Oryctolagus cuniculus (Rabbit).